Consider the following 224-residue polypeptide: Lipoprotein-releasing system ATP-binding protein LolD (224 aa).

Positions 4 to 224 constitute an ABC transporter domain; that stretch reads YTAKDISKNY…TLLDGSLQEE (221 aa). Residue 40 to 47 participates in ATP binding; it reads GASGSGKT.

This sequence belongs to the ABC transporter superfamily. Lipoprotein translocase (TC 3.A.1.125) family. The complex is composed of two ATP-binding proteins (LolD) and two transmembrane proteins (LolC and LolE).

The protein resides in the cell inner membrane. Functionally, part of the ABC transporter complex LolCDE involved in the translocation of mature outer membrane-directed lipoproteins, from the inner membrane to the periplasmic chaperone, LolA. Responsible for the formation of the LolA-lipoprotein complex in an ATP-dependent manner. The protein is Lipoprotein-releasing system ATP-binding protein LolD of Desulfotalea psychrophila (strain LSv54 / DSM 12343).